Reading from the N-terminus, the 339-residue chain is Bifunctional phosphoglucose/phosphomannose isomerase (339 aa).

The SIS domain occupies 22–164; that stretch reads ISVNVKAEDI…IEPVDDQIEE (143 aa). Positions 41, 42, 83, 85, 88, and 135 each coordinate D-fructose 6-phosphate. Glu-221 (proton acceptor) is an active-site residue. D-fructose 6-phosphate is bound by residues His-237 and Lys-331. His-237 serves as the catalytic Proton donor. Lys-331 acts as the Proton acceptor in catalysis.

Belongs to the PGI/PMI family. Homodimer.

The enzyme catalyses alpha-D-glucose 6-phosphate = beta-D-fructose 6-phosphate. The catalysed reaction is D-mannose 6-phosphate = D-fructose 6-phosphate. Functionally, dual specificity isomerase that catalyzes the isomerization of both glucose-6-phosphate and mannose-6-phosphate to fructose-6-phosphate. This is Bifunctional phosphoglucose/phosphomannose isomerase from Caldicellulosiruptor bescii (strain ATCC BAA-1888 / DSM 6725 / KCTC 15123 / Z-1320) (Anaerocellum thermophilum).